Reading from the N-terminus, the 191-residue chain is Corrinoid adenosyltransferase (191 aa).

ATP is bound by residues 10–18, Lys-28, 140–145, and Asn-166; these read TRTGDNGTT and RRAERS.

This sequence belongs to the Cob(I)alamin adenosyltransferase family.

Its subcellular location is the cytoplasm. The catalysed reaction is 2 cob(II)yrinate a,c diamide + reduced [electron-transfer flavoprotein] + 2 ATP = 2 adenosylcob(III)yrinate a,c-diamide + 2 triphosphate + oxidized [electron-transfer flavoprotein] + 3 H(+). It catalyses the reaction 2 cob(II)alamin + reduced [electron-transfer flavoprotein] + 2 ATP = 2 adenosylcob(III)alamin + 2 triphosphate + oxidized [electron-transfer flavoprotein] + 3 H(+). Its pathway is cofactor biosynthesis; adenosylcobalamin biosynthesis; adenosylcobalamin from cob(II)yrinate a,c-diamide: step 2/7. This chain is Corrinoid adenosyltransferase, found in Mycobacterium leprae (strain TN).